The following is a 723-amino-acid chain: Nucleolar protein 11 (723 aa).

The residue at position 346 (Lys-346) is an N6-methyllysine. Residues 549 to 572 (FGPEDGNCSEDSQQLNDKPADTAH) are disordered.

Interacts with UTP4. Interacts with FBL/fibrillarin in a transcription-dependent manner. May associate with the proposed t-UTP subcomplex of the SSU processome containing at least UTP4, WDR43, HEATR1, UTP15, WDR75.

It localises to the nucleus. Its subcellular location is the nucleolus. Its function is as follows. Ribosome biogenesis factor. May be required for both optimal rDNA transcription and small subunit (SSU) pre-rRNA processing at sites A', A0, 1 and 2b. This chain is Nucleolar protein 11 (Nol11), found in Mus musculus (Mouse).